We begin with the raw amino-acid sequence, 329 residues long: Ketol-acid reductoisomerase (NADP(+)) (329 aa).

The KARI N-terminal Rossmann domain maps to Ala2–Thr182. NADP(+) contacts are provided by residues Tyr25 to Gln28, Ser51, Ser53, and Asp83 to Gln86. Residue His108 is part of the active site. Gly134 contributes to the NADP(+) binding site. The KARI C-terminal knotted domain maps to Thr183–Leu328. Positions 191, 195, 227, and 231 each coordinate Mg(2+). A substrate-binding site is contributed by Ser252.

It belongs to the ketol-acid reductoisomerase family. Requires Mg(2+) as cofactor.

It carries out the reaction (2R)-2,3-dihydroxy-3-methylbutanoate + NADP(+) = (2S)-2-acetolactate + NADPH + H(+). The catalysed reaction is (2R,3R)-2,3-dihydroxy-3-methylpentanoate + NADP(+) = (S)-2-ethyl-2-hydroxy-3-oxobutanoate + NADPH + H(+). It participates in amino-acid biosynthesis; L-isoleucine biosynthesis; L-isoleucine from 2-oxobutanoate: step 2/4. It functions in the pathway amino-acid biosynthesis; L-valine biosynthesis; L-valine from pyruvate: step 2/4. Its function is as follows. Involved in the biosynthesis of branched-chain amino acids (BCAA). Catalyzes an alkyl-migration followed by a ketol-acid reduction of (S)-2-acetolactate (S2AL) to yield (R)-2,3-dihydroxy-isovalerate. In the isomerase reaction, S2AL is rearranged via a Mg-dependent methyl migration to produce 3-hydroxy-3-methyl-2-ketobutyrate (HMKB). In the reductase reaction, this 2-ketoacid undergoes a metal-dependent reduction by NADPH to yield (R)-2,3-dihydroxy-isovalerate. In Clostridioides difficile (strain 630) (Peptoclostridium difficile), this protein is Ketol-acid reductoisomerase (NADP(+)).